A 154-amino-acid chain; its full sequence is Protein X (154 aa).

The mitochondrial targeting sequence stretch occupies residues 68-117 (PCALRFTSARYMETAMNTSHHLPRQLYKWTLGLFVMSTTGVEKYFKDCVF).

This sequence belongs to the orthohepadnavirus protein X family. May form homodimer. May interact with host CEBPA, CFLAR, CREB1, DDB1, E4F1, HBXIP, HSPD1/HSP60, NFKBIA, POLR2E and SMAD4. Interacts with host SMC5-SMC6 complex and induces its degradation. Interacts with host TRPC4AP; leading to prevent ubiquitination of TRPC4AP. Interacts with host PLSCR1; this interaction promotes ubiquitination and degradation of HBx and impairs HBx-mediated cell proliferation. Post-translationally, a fraction may be phosphorylated in insect cells and HepG2 cells, a human hepatoblastoma cell line. Phosphorylated in vitro by host protein kinase C or mitogen-activated protein kinase. N-acetylated in insect cells.

It is found in the host cytoplasm. The protein resides in the host nucleus. It localises to the host mitochondrion. Functionally, multifunctional protein that plays a role in silencing host antiviral defenses and promoting viral transcription. Does not seem to be essential for HBV infection. May be directly involved in development of cirrhosis and liver cancer (hepatocellular carcinoma). Most of cytosolic activities involve modulation of cytosolic calcium. The effect on apoptosis is controversial depending on the cell types in which the studies have been conducted. May induce apoptosis by localizing in mitochondria and causing loss of mitochondrial membrane potential. May also modulate apoptosis by binding host CFLAR, a key regulator of the death-inducing signaling complex (DISC). Promotes viral transcription by using the host E3 ubiquitin ligase DDB1 to target the SMC5-SMC6 complex to proteasomal degradation. This host complex would otherwise bind to viral episomal DNA, and prevents its transcription. Moderately stimulates transcription of many different viral and cellular transcription elements. Promoters and enhancers stimulated by HBx contain DNA binding sites for NF-kappa-B, AP-1, AP-2, c-EBP, ATF/CREB, or the calcium-activated factor NF-AT. The sequence is that of Protein X from Hepatitis B virus genotype G (isolate IG29227/2000) (HBV-G).